The chain runs to 111 residues: uncharacterized protein (111 aa).

Belongs to the SUI1 family.

This is an uncharacterized protein from Synechocystis sp. (strain ATCC 27184 / PCC 6803 / Kazusa).